The primary structure comprises 161 residues: ATP synthase subunit b (161 aa).

Residues 10 to 29 (SVIQLMSFFLLLYILKKFLY) form a helical membrane-spanning segment.

It belongs to the ATPase B chain family. F-type ATPases have 2 components, F(1) - the catalytic core - and F(0) - the membrane proton channel. F(1) has five subunits: alpha(3), beta(3), gamma(1), delta(1), epsilon(1). F(0) has three main subunits: a(1), b(2) and c(10-14). The alpha and beta chains form an alternating ring which encloses part of the gamma chain. F(1) is attached to F(0) by a central stalk formed by the gamma and epsilon chains, while a peripheral stalk is formed by the delta and b chains.

It is found in the cell inner membrane. Functionally, f(1)F(0) ATP synthase produces ATP from ADP in the presence of a proton or sodium gradient. F-type ATPases consist of two structural domains, F(1) containing the extramembraneous catalytic core and F(0) containing the membrane proton channel, linked together by a central stalk and a peripheral stalk. During catalysis, ATP synthesis in the catalytic domain of F(1) is coupled via a rotary mechanism of the central stalk subunits to proton translocation. Component of the F(0) channel, it forms part of the peripheral stalk, linking F(1) to F(0). This Thermosipho melanesiensis (strain DSM 12029 / CIP 104789 / BI429) protein is ATP synthase subunit b.